The chain runs to 273 residues: Tryptophan synthase alpha chain (273 aa).

Residues Glu-56 and Asp-67 each act as proton acceptor in the active site.

Belongs to the TrpA family. As to quaternary structure, tetramer of two alpha and two beta chains.

The enzyme catalyses (1S,2R)-1-C-(indol-3-yl)glycerol 3-phosphate + L-serine = D-glyceraldehyde 3-phosphate + L-tryptophan + H2O. The protein operates within amino-acid biosynthesis; L-tryptophan biosynthesis; L-tryptophan from chorismate: step 5/5. The alpha subunit is responsible for the aldol cleavage of indoleglycerol phosphate to indole and glyceraldehyde 3-phosphate. In Shewanella baltica (strain OS155 / ATCC BAA-1091), this protein is Tryptophan synthase alpha chain.